A 73-amino-acid chain; its full sequence is UPF0499 protein CHGG_06021 (73 aa).

The signal sequence occupies residues 1–20 (MKSSIHVVLFFLLSLVASMA). Intrachain disulfides connect C41/C55, C48/C60, and C54/C69.

Belongs to the UPF0499 family.

It localises to the secreted. The protein is UPF0499 protein CHGG_06021 of Chaetomium globosum (strain ATCC 6205 / CBS 148.51 / DSM 1962 / NBRC 6347 / NRRL 1970) (Soil fungus).